The following is an 80-amino-acid chain: uncharacterized protein (80 aa).

The disordered stretch occupies residues 57–80; it reads GNIDSDVSDQDQIGNPSAPISNQI.

This is an uncharacterized protein from Bacillus subtilis (strain 168).